The sequence spans 280 residues: uncharacterized protein (280 aa).

It to E.coli YgfZ (UP14) and B.aphidicola (subsp. Acyrthosiphon pisum) BU435.

This is an uncharacterized protein from Haemophilus influenzae (strain ATCC 51907 / DSM 11121 / KW20 / Rd).